We begin with the raw amino-acid sequence, 190 residues long: ADP-ribosylation factor-like protein 6 (190 aa).

Gly-2 carries N-myristoyl glycine lipidation. Residues 24–31, Thr-50, 69–73, Gly-72, 130–133, and Ala-164 each bind GTP; these read GLDNSGKT, DMAGQ, and NKMD. Positions 31 and 50 each coordinate Mg(2+).

This sequence belongs to the small GTPase superfamily. Arf family.

The protein resides in the cytoplasm. The protein is ADP-ribosylation factor-like protein 6 of Caenorhabditis briggsae.